We begin with the raw amino-acid sequence, 622 residues long: Cilia- and flagella-associated protein 206 (622 aa).

Belongs to the CFAP206 family.

The protein localises to the cytoplasm. Its subcellular location is the cytoskeleton. It localises to the cilium axoneme. It is found in the cilium basal body. Functionally, essential for sperm motility and is involved in the regulation of the beating frequency of motile cilia on the epithelial cells of the respiratory tract. Required for the establishment of radial spokes in sperm flagella. The protein is Cilia- and flagella-associated protein 206 of Rattus norvegicus (Rat).